A 555-amino-acid chain; its full sequence is Urocanate hydratase (555 aa).

Residues 51–52 (GG), Gln129, 175–177 (GMG), Glu195, 262–266 (QTSAH), 272–273 (YL), and Tyr321 each bind NAD(+). Residue Cys409 is part of the active site. Gly491 provides a ligand contact to NAD(+).

The protein belongs to the urocanase family. NAD(+) is required as a cofactor.

It is found in the cytoplasm. The enzyme catalyses 4-imidazolone-5-propanoate = trans-urocanate + H2O. It functions in the pathway amino-acid degradation; L-histidine degradation into L-glutamate; N-formimidoyl-L-glutamate from L-histidine: step 2/3. Its function is as follows. Catalyzes the conversion of urocanate to 4-imidazolone-5-propionate. In Stenotrophomonas maltophilia (strain R551-3), this protein is Urocanate hydratase.